Consider the following 1529-residue polypeptide: Slit homolog 2 protein (1529 aa).

The first 30 residues, 1-30 (MRGVGWQMLSLSLGLVLAILNKVAPQACPA), serve as a signal peptide directing secretion. The LRRNT domain maps to 31 to 55 (QCSCSGSTVDCHGLALRSVPRNIPR). LRR repeat units lie at residues 56-77 (NTER…DFAG), 80-101 (HLRV…AFQD), 104-125 (ELER…LFLG), 128-149 (KLYR…AFRG), 152-173 (DIKN…AFRA), and 176-197 (DLEV…SFNH). N66 carries N-linked (GlcNAc...) asparagine glycosylation. A glycan (N-linked (GlcNAc...) asparagine) is linked at N186. The region spanning 209 to 259 (NNLYCDCHLAWLSDWLRQRPRVGLYTQCMGPSHLRGHNVAEVQKREFVCSG) is the LRRCT 1 domain. An LRRNT 2 domain is found at 264 to 300 (MAPSCSVLHCPAACTCSNNIVDCRGKGLTEIPTNLPE). C277 and C286 are disulfide-bonded. LRR repeat units follow at residues 301 to 322 (TITE…AFSP), 325 to 346 (KLRR…AFQG), 349 to 370 (SLNS…LFEG), 373 to 394 (SLQL…AFQD), and 397 to 418 (NLNL…TFSP). The 51-residue stretch at 430–480 (NPFICDCHLKWLADYLHTNPIETSGARCTSPRRLANKRIGQIKSKKFRCSA) folds into the LRRCT 2 domain. 4 cysteine pairs are disulfide-bonded: C434-C457, C436-C478, C506-C512, and C510-C519. An LRRNT 3 domain is found at 497 to 533 (SGDCFADLACPEKCRCEGTTVDCSNQKLNKIPEHIPQ). LRR repeat units lie at residues 534–555 (YTAE…GIFK), 559–580 (QLRK…AFEG), 583–604 (GVNE…MFKG), 607–628 (SLKT…SFIG), and 631–652 (SVRL…AFDT). The N-linked (GlcNAc...) asparagine glycan is linked to N564. N623 carries N-linked (GlcNAc...) asparagine glycosylation. Residues 664–714 (NPFNCNCYLAWLGEWLRKKRIVTGNPRCQKPYFLKEIPIQDVAIQDFTCDD) form the LRRCT 3 domain. 4 cysteine pairs are disulfide-bonded: C668-C691, C670-C712, C727-C733, and C731-C740. The LRRNT 4 domain occupies 718-754 (DNSCSPLSRCPTECTCLDTVVRCSNKGLKVLPKGIPR). 4 LRR repeats span residues 755-777 (DVTE…SNYK), 778-799 (HLTL…SFSN), 802-823 (QLLT…TFDG), and 826-847 (SLRL…AFND). N-linked (GlcNAc...) asparagine glycosylation is found at N794 and N799. The region spanning 859-909 (NPLYCDCNMQWLSDWVKSEYKEPGIARCAGPGEMADKLLLTTPSKKFTCQG) is the LRRCT 4 domain. 20 disulfide bridges follow: C863–C886, C865–C907, C922–C933, C927–C943, C945–C954, C961–C972, C966–C984, C986–C995, C1002–C1013, C1007–C1022, C1024–C1033, C1040–C1053, C1047–C1062, C1064–C1073, C1080–C1091, C1085–C1100, C1102–C1111, C1125–C1136, C1130–C1145, and C1147–C1156. 2 consecutive EGF-like domains span residues 918–955 (KCNP…QDCD) and 957–996 (PIHA…ENCE). Residues 998-1034 (NVDDCEDNDCENNSTCVDGINNYTCLCPPEYTGELCE) enclose the EGF-like 3; calcium-binding domain. N1009, N1010, and N1019 each carry an N-linked (GlcNAc...) asparagine glycan. Positions 1036-1074 (KLDFCAQDLNPCQHDSKCILTPKGFKCDCTPGYVGEHCD) constitute an EGF-like 4 domain. The EGF-like 5; calcium-binding domain occupies 1076–1112 (DFDDCQDNKCKNGAHCTDAVNGYTCICPEGYSGLFCE). The 37-residue stretch at 1121–1157 (RTSPCDNFDCQNGAQCIVRINEPICQCLPGYQGEKCE) folds into the EGF-like 6 domain. Positions 1160–1333 (VSVNFINKES…PMQTGILPGC (174 aa)) constitute a Laminin G-like domain. N1183, N1266, and N1300 each carry an N-linked (GlcNAc...) asparagine glycan. 14 disulfides stabilise this stretch: C1307–C1333, C1336–C1346, C1341–C1356, C1358–C1367, C1375–C1385, C1380–C1395, C1397–C1406, C1416–C1426, C1421–C1436, C1438–C1447, C1453–C1492, C1471–C1506, C1482–C1522, and C1486–C1524. One can recognise an EGF-like 7 domain in the interval 1332-1368 (GCEPCHKKVCAHGTCQPSSQAGFTCECQEGWMGPLCD). One can recognise a CTCK domain in the interval 1453 to 1528 (CRGERIRDYY…VVKCGCTRCV (76 aa)).

As to quaternary structure, interacts with GREM1. Homodimer. Binds ROBO1 and ROBO2 with high affinity. In terms of tissue distribution, fetal lung and kidney, and adult spinal cord. Weak expression in adult adrenal gland, thyroid, trachea and other tissues examined.

It localises to the secreted. Functionally, thought to act as molecular guidance cue in cellular migration, and function appears to be mediated by interaction with roundabout homolog receptors. During neural development involved in axonal navigation at the ventral midline of the neural tube and projection of axons to different regions. SLIT1 and SLIT2 seem to be essential for midline guidance in the forebrain by acting as repulsive signal preventing inappropriate midline crossing by axons projecting from the olfactory bulb. In spinal cord development may play a role in guiding commissural axons once they reached the floor plate by modulating the response to netrin. In vitro, silences the attractive effect of NTN1 but not its growth-stimulatory effect and silencing requires the formation of a ROBO1-DCC complex. May be implicated in spinal cord midline post-crossing axon repulsion. In vitro, only commissural axons that crossed the midline responded to SLIT2. In the developing visual system appears to function as repellent for retinal ganglion axons by providing a repulsion that directs these axons along their appropriate paths prior to, and after passage through, the optic chiasm. In vitro, collapses and repels retinal ganglion cell growth cones. Seems to play a role in branching and arborization of CNS sensory axons, and in neuronal cell migration. In vitro, Slit homolog 2 protein N-product, but not Slit homolog 2 protein C-product, repels olfactory bulb (OB) but not dorsal root ganglia (DRG) axons, induces OB growth cones collapse and induces branching of DRG axons. Seems to be involved in regulating leukocyte migration. This is Slit homolog 2 protein (SLIT2) from Homo sapiens (Human).